We begin with the raw amino-acid sequence, 380 residues long: SAM and SH3 domain-containing protein 3 (380 aa).

The tract at residues 1–174 is disordered; it reads MLRRKPSNAS…STAPQYTGPF (174 aa). Residues 22–41 are compositionally biased toward low complexity; that stretch reads LQRSSSFKDFAKSKPSSPVV. A phosphoserine mark is found at Ser-27, Ser-34, and Ser-42. Thr-61 is subject to Phosphothreonine. The span at 84–93 shows a compositional bias: basic residues; sequence MNRKTGKKMV. The residue at position 97 (Ser-97) is a Phosphoserine. Thr-103 is subject to Phosphothreonine. At Ser-110 the chain carries Phosphoserine. Position 112 is a phosphothreonine (Thr-112). Phosphoserine is present on residues Ser-113 and Ser-120. Residues 143–158 show a composition bias toward polar residues; the sequence is RQASTGSELCSPSPGS. The SH3 domain occupies 173-234; it reads PFCGRARVHT…KFIYVDVLPE (62 aa). An SAM domain is found at 252–316; the sequence is PKPKTLHELL…LTAAELLLDY (65 aa). Thr-318 is subject to Phosphothreonine. The span at 318-327 shows a compositional bias: acidic residues; it reads TGSEEAEEGT. Positions 318-380 are disordered; that stretch reads TGSEEAEEGT…LHGLSLSGAP (63 aa). Residue Ser-320 is modified to Phosphoserine.

The protein belongs to the SASH family.

In terms of biological role, may function as a signaling adapter protein in lymphocytes. The polypeptide is SAM and SH3 domain-containing protein 3 (Bos taurus (Bovine)).